The following is a 97-amino-acid chain: MKRISSDEVKKVAQLARLELNESEINQHAEQLEKILEYIKQLEKINTEDIPCTTRAIEVVNVLRKDEKKNYENSEEILDLAPSRENKFFKVPKIINE.

It belongs to the GatC family. Heterotrimer of A, B and C subunits.

The enzyme catalyses L-glutamyl-tRNA(Gln) + L-glutamine + ATP + H2O = L-glutaminyl-tRNA(Gln) + L-glutamate + ADP + phosphate + H(+). It carries out the reaction L-aspartyl-tRNA(Asn) + L-glutamine + ATP + H2O = L-asparaginyl-tRNA(Asn) + L-glutamate + ADP + phosphate + 2 H(+). In terms of biological role, allows the formation of correctly charged Asn-tRNA(Asn) or Gln-tRNA(Gln) through the transamidation of misacylated Asp-tRNA(Asn) or Glu-tRNA(Gln) in organisms which lack either or both of asparaginyl-tRNA or glutaminyl-tRNA synthetases. The reaction takes place in the presence of glutamine and ATP through an activated phospho-Asp-tRNA(Asn) or phospho-Glu-tRNA(Gln). This is Aspartyl/glutamyl-tRNA(Asn/Gln) amidotransferase subunit C from Prochlorococcus marinus subsp. pastoris (strain CCMP1986 / NIES-2087 / MED4).